A 1000-amino-acid chain; its full sequence is Sop-2-related protein 1 (1000 aa).

3 disordered regions span residues lysine 355–glutamine 374, histidine 379–glutamate 422, and alanine 466–glycine 509. Residues serine 390–serine 404 show a composition bias toward low complexity. A compositionally biased stretch (basic and acidic residues) spans alanine 406–arginine 415. Residues glycine 489–glutamine 502 are compositionally biased toward low complexity. Residues arginine 633 to glutamate 720 form an RNA-binding region. The disordered stretch occupies residues histidine 948–threonine 1000. Over residues asparagine 960–alanine 992 the composition is skewed to low complexity.

Binds through its N-terminal region to the N-terminal region of sop-2.

It is found in the nucleus. Functionally, acts synergistically with sop-2 to maintain the transcriptionally repressive state of homeotic genes throughout development. Not required to initiate repression, but to maintain it during later stages of development. Also required to repress expression of other genes. Binds RNA in a sequence-independent manner. In Caenorhabditis elegans, this protein is Sop-2-related protein 1 (sor-1).